The chain runs to 331 residues: Probable cytosolic iron-sulfur protein assembly protein Ciao1 (331 aa).

7 WD repeats span residues 12-51 (GHKG…WTTK), 57-96 (GHKR…ATLE), 97-136 (GHEN…EFEC), 142-181 (AHSQ…SDWD), 188-227 (SHTS…NEAG), 246-285 (LHTR…KRDA), and 297-331 (AHEQ…KLQE).

The protein belongs to the WD repeat CIA1 family.

In terms of biological role, essential component of the cytosolic iron-sulfur (Fe/S) protein assembly machinery. Required for the maturation of extramitochondrial Fe/S proteins. The polypeptide is Probable cytosolic iron-sulfur protein assembly protein Ciao1 (Drosophila mojavensis (Fruit fly)).